Reading from the N-terminus, the 583-residue chain is Protein cps3 (583 aa).

2 C3H1-type zinc fingers span residues 35-62 (SLQH…HDLE) and 64-91 (ATEK…HVLP). Disordered regions lie at residues 318–346 (LGRP…NGST), 471–490 (KVSS…YNGT), and 504–532 (RQES…KNLG). 3 stretches are compositionally biased toward polar residues: residues 323 to 334 (KSPSVPTSVGSN), 475 to 490 (NLNS…YNGT), and 513 to 532 (PSLN…KNLG).

The protein resides in the cytoplasm. Responsible for supersensitivity to the spindle poison, isopropyl N-3-chlorophenyl carbamate. Has a role in meiosis. In Schizosaccharomyces pombe (strain 972 / ATCC 24843) (Fission yeast), this protein is Protein cps3 (cps3).